Consider the following 453-residue polypeptide: Midnolin (453 aa).

Residues 20–94 (MNLNIQSTTG…LTLLPSVEAG (75 aa)) form the Ubiquitin-like domain. 4 disordered regions span residues 185-219 (HLAS…TTSV), 231-256 (PCAE…RSRK), 330-374 (SQAR…QTEN), and 390-434 (QKRL…IDFE). 2 stretches are compositionally biased toward low complexity: residues 188-204 (SCTP…PTAS) and 239-252 (SSRG…SASS). Residues 330–362 (SQARNPKATSPQSSEPQQTTHPVGHCQAQTRTC) show a composition bias toward polar residues. Residues 365–374 (SGDRLRQTEN) are compositionally biased toward basic and acidic residues. Residues 390-399 (QKRLRRKARR) are compositionally biased toward basic residues. Over residues 415-428 (RTSSNSSTSSGEGS) the composition is skewed to low complexity.

The protein resides in the nucleus. The protein localises to the cytoplasm. It localises to the cytosol. Its subcellular location is the nucleolus. Functionally, facilitates ubiquitin-independent proteasomal degradation of polycomb protein CBX4. Plays a role in inhibiting the activity of glucokinase GCK and both glucose-induced and basal insulin secretion. In Xenopus tropicalis (Western clawed frog), this protein is Midnolin (midn).